Reading from the N-terminus, the 956-residue chain is Plasma membrane ATPase 1 (956 aa).

At 1–65 (MAEKPEVLDA…EKKESKFLKF (65 aa)) the chain is on the cytoplasmic side. A helical transmembrane segment spans residues 66 to 85 (LGFMWNPLSWVMEAAAIMAI). Over 86 to 97 (ALANGGGKPPDW) the chain is Extracellular. A helical membrane pass occupies residues 98–118 (QDFVGIITLLIINSTISFIEE). The Cytoplasmic portion of the chain corresponds to 119–247 (NNAGNAAAAL…GHFQKVLTAI (129 aa)). Residues 248-268 (GNFCICSIAVGMIIEIIVMYP) traverse the membrane as a helical segment. Over 269 to 277 (IQHRKYRPG) the chain is Extracellular. Residues 278–295 (IDNLLVLLIGGIPIAMPT) traverse the membrane as a helical segment. Residues 296 to 646 (VLSVTMAIGS…LTSRAIFQRM (351 aa)) lie on the Cytoplasmic side of the membrane. Aspartate 333 functions as the 4-aspartylphosphate intermediate in the catalytic mechanism. Mg(2+)-binding residues include aspartate 592 and aspartate 596. Residues 647–666 (KNYTIYAVSITIRIVLGFML) traverse the membrane as a helical segment. At 667–674 (LALIWKFD) the chain is on the extracellular side. A helical transmembrane segment spans residues 675–697 (FPPFMVLIIAILNDGTIMTISKD). Residues 698 to 713 (RVKPSPLPDSWKLAEI) are Cytoplasmic-facing. A helical transmembrane segment spans residues 714 to 734 (FTTGVVLGGYLAMMTVIFFWA). Residues 735–759 (AYKTNFFPRIFGVSTLEKTATDDFR) are Extracellular-facing. Residues 760–780 (KLASAIYLQVSTISQALIFVT) traverse the membrane as a helical segment. The Cytoplasmic segment spans residues 781-792 (RSRSWSFVERPG). The helical transmembrane segment at 793–813 (LLLVFAFFVAQLVATLIAVYA) threads the bilayer. The Extracellular segment spans residues 814 to 821 (NWSFAAIE). A helical transmembrane segment spans residues 822 to 842 (GIGWGWAGVIWLYNIVTYIPL). At 843 to 956 (DLIKFLIRYA…IETIQQSYTV (114 aa)) the chain is on the cytoplasmic side.

It belongs to the cation transport ATPase (P-type) (TC 3.A.3) family. Type IIIA subfamily. Possibly exists as a homodimer or a homotrimer.

It is found in the cell membrane. It catalyses the reaction ATP + H2O + H(+)(in) = ADP + phosphate + 2 H(+)(out). In terms of biological role, the plasma membrane ATPase of plants and fungi is a hydrogen ion pump. The proton gradient it generates drives the active transport of nutrients by H(+)-symport. The resulting external acidification and/or internal alkinization may mediate growth responses. This chain is Plasma membrane ATPase 1 (LHA1), found in Solanum lycopersicum (Tomato).